The chain runs to 109 residues: Large ribosomal subunit protein uL24 (109 aa).

A disordered region spans residues 1–24; sequence MANVTTDIKRNDTVAVTSGKDKGK.

The protein belongs to the universal ribosomal protein uL24 family. As to quaternary structure, part of the 50S ribosomal subunit.

Its function is as follows. One of two assembly initiator proteins, it binds directly to the 5'-end of the 23S rRNA, where it nucleates assembly of the 50S subunit. In terms of biological role, one of the proteins that surrounds the polypeptide exit tunnel on the outside of the subunit. The sequence is that of Large ribosomal subunit protein uL24 from Koribacter versatilis (strain Ellin345).